The following is a 300-amino-acid chain: Ribonuclease HIII (300 aa).

Residues 83-300 enclose the RNase H type-2 domain; the sequence is IPIIGSDEVG…THKAQALLTK (218 aa). 3 residues coordinate a divalent metal cation: Asp-89, Glu-90, and Asp-194.

It belongs to the RNase HII family. RnhC subfamily. Mn(2+) is required as a cofactor. The cofactor is Mg(2+).

The protein resides in the cytoplasm. The catalysed reaction is Endonucleolytic cleavage to 5'-phosphomonoester.. Functionally, endonuclease that specifically degrades the RNA of RNA-DNA hybrids. This Streptococcus pyogenes serotype M12 (strain MGAS2096) protein is Ribonuclease HIII.